We begin with the raw amino-acid sequence, 275 residues long: Prohibitin-1 (275 aa).

An AIM motif is present at residues 106 to 109; sequence YQNL.

The protein belongs to the prohibitin family. In terms of assembly, the mitochondrial prohibitin complex consists of two subunits (PHB1 and PHB2). The subunits assemble into a membrane-associated ring-shaped supercomplex of approximately 1 mDa. Interacts with ATG24/SNX4; the interaction is direct and plays a role in mitophagy.

It is found in the mitochondrion inner membrane. Prohibitin probably acts as a holdase/unfoldase for the stabilization of newly synthesized mitochondrial proteins. Involved in mitophagy. Required for the switch to necrotrophic growth. The sequence is that of Prohibitin-1 from Colletotrichum higginsianum (strain IMI 349063) (Crucifer anthracnose fungus).